The chain runs to 1127 residues: Nck-associated protein 1-like (1127 aa).

The segment at 638 to 670 (KAKNKKTRKQRQTPRKGEPERDKPGAESHRKNR) is disordered. Residues 639-651 (AKNKKTRKQRQTP) show a composition bias toward basic residues. The span at 652-666 (RKGEPERDKPGAESH) shows a compositional bias: basic and acidic residues. A helical transmembrane segment spans residues 996 to 1016 (VACLLLIFLAVSLPLLATDPS).

Belongs to the HEM-1/HEM-2 family. In terms of assembly, in hematopoietic cells, component of the WAVE2 complex composed of ABI1, CYFIP1/SRA1, NCKAP1L/HEM1 and WASF2/WAVE2. Interacts with ARHGAP4, PIK3C3/VPS34 and PPP1R12A/MYPT1. Interacts with mammalian target of rapamycin complex 2 (mTORC2) components, including MTOR and RICTOR. Expressed only in cells of hematopoietic origin. Expressed in neutrophils (at protein level). Expressed in T-cells (at protein level).

It localises to the cell membrane. The protein localises to the cytoplasm. Functionally, essential hematopoietic-specific regulator of the actin cytoskeleton. Controls lymphocyte development, activation, proliferation and homeostasis, erythrocyte membrane stability, as well as phagocytosis and migration by neutrophils and macrophages. Component of the WAVE2 complex which signals downstream of RAC to stimulate F-actin polymerization. Required for stabilization and/or translation of the WAVE2 complex proteins in hematopoietic cells. Within the WAVE2 complex, enables the cortical actin network to restrain excessive degranulation and granule release by T-cells. Required for efficient T-lymphocyte and neutrophil migration. Exhibits complex cycles of activation and inhibition to generate waves of propagating the assembly with actin. Also involved in mechanisms WAVE-independent to regulate myosin and actin polymerization during neutrophil chemotaxis. In T-cells, required for proper mechanistic target of rapamycin complex 2 (mTORC2)-dependent AKT phosphorylation, cell proliferation and cytokine secretion, including that of IL2 and TNF. This Homo sapiens (Human) protein is Nck-associated protein 1-like.